Consider the following 218-residue polypeptide: Octanoyltransferase (218 aa).

Positions 30 to 213 (GEIEDTLILV…YFSEVFNYDI (184 aa)) constitute a BPL/LPL catalytic domain. Residues 75–82 (RGGDVTYH), 143–145 (AIG), and 156–158 (GFA) each bind substrate. Residue Cys-174 is the Acyl-thioester intermediate of the active site.

It belongs to the LipB family.

It is found in the cytoplasm. The catalysed reaction is octanoyl-[ACP] + L-lysyl-[protein] = N(6)-octanoyl-L-lysyl-[protein] + holo-[ACP] + H(+). It functions in the pathway protein modification; protein lipoylation via endogenous pathway; protein N(6)-(lipoyl)lysine from octanoyl-[acyl-carrier-protein]: step 1/2. Catalyzes the transfer of endogenously produced octanoic acid from octanoyl-acyl-carrier-protein onto the lipoyl domains of lipoate-dependent enzymes. Lipoyl-ACP can also act as a substrate although octanoyl-ACP is likely to be the physiological substrate. In Alkaliphilus metalliredigens (strain QYMF), this protein is Octanoyltransferase.